A 441-amino-acid polypeptide reads, in one-letter code: MDNYFGTDGMRGKVGVEPITADFFLKLGWAVGSVLAKRAKASVIIGKDTRVSGYLFESALEAGFLSAGVDVGLLGPMPTPAVAYLTQTYNASAGVVISASHNNFQDNGVKFFSAKGLKLSSQYQSEIEKKLAETMISVGADKIGKAYRYEQPLGRYIEFCKSTFDRTQSLLGLNIVIDCANGATYHIAQSVFSELGANINIINNTPDGFNINEHCGATDTKYLQQVVLESKADLGIAFDGDGDRLIMIDENGELVDGDELVFIIAKAWQSQGRLVNNTVVGTKMSNLGMHHALRDLDIKFIEADVGDRFVMEKMQKSGSILGGEGSGHIICLNKTTSGDGIISALQVLEVLVKSQSSLAKLKQSMEKYPQILINVKTQARINLKNYTKLQRTQLAVEQTLGDESRVLIRVSGTEPLIRVMVEAKDKIIAQQGAEKLSNIFK.

S100 functions as the Phosphoserine intermediate in the catalytic mechanism. The Mg(2+) site is built by S100, D239, D241, and D243. S100 carries the phosphoserine modification.

It belongs to the phosphohexose mutase family. It depends on Mg(2+) as a cofactor. In terms of processing, activated by phosphorylation.

It carries out the reaction alpha-D-glucosamine 1-phosphate = D-glucosamine 6-phosphate. Catalyzes the conversion of glucosamine-6-phosphate to glucosamine-1-phosphate. The chain is Phosphoglucosamine mutase from Ruthia magnifica subsp. Calyptogena magnifica.